Reading from the N-terminus, the 160-residue chain is Serine-protein kinase RsbW (160 aa).

The protein belongs to the anti-sigma-factor family.

It carries out the reaction L-seryl-[protein] + ATP = O-phospho-L-seryl-[protein] + ADP + H(+). The catalysed reaction is L-threonyl-[protein] + ATP = O-phospho-L-threonyl-[protein] + ADP + H(+). In terms of biological role, negative regulator of sigma-B activity. Phosphorylates and inactivates its specific antagonist protein, RsbV. Upon phosphorylation of RsbV, RsbW is released and binds to sigma-B, thereby blocking its ability to form an RNA polymerase holoenzyme (E-sigma-B). This is Serine-protein kinase RsbW from Bacillus cereus (strain Q1).